The following is a 55-amino-acid chain: MLQYALVFFVIALIAAIFGFGGIAAGAVEIAKILFFIFLVVALVAAVMGLVRRGR.

The next 2 membrane-spanning stretches (helical) occupy residues 5 to 25 and 30 to 50; these read ALVF…GIAA and IAKI…VMGL.

This sequence belongs to the UPF0391 family.

The protein resides in the cell membrane. The polypeptide is UPF0391 membrane protein RALTA_A0099 (Cupriavidus taiwanensis (strain DSM 17343 / BCRC 17206 / CCUG 44338 / CIP 107171 / LMG 19424 / R1) (Ralstonia taiwanensis (strain LMG 19424))).